The chain runs to 311 residues: Putative dihydroorotate dehydrogenase A (fumarate) (311 aa).

Substrate contacts are provided by residues K45, 69 to 73 (NSMGL), and N128. An FMN-binding site is contributed by 45 to 46 (KT). N128 contributes to the FMN binding site. Residue C131 is the Nucleophile of the active site. FMN is bound by residues K165 and V193. 194–195 (NS) is a substrate binding site. FMN contacts are provided by residues G220, 248–249 (GG), and 270–271 (GT).

It belongs to the dihydroorotate dehydrogenase family. Type 1 subfamily. As to quaternary structure, homodimer. FMN is required as a cofactor.

Its subcellular location is the cytoplasm. The enzyme catalyses (S)-dihydroorotate + fumarate = orotate + succinate. It functions in the pathway pyrimidine metabolism; UMP biosynthesis via de novo pathway. Functionally, catalyzes the conversion of dihydroorotate to orotate with fumarate as the electron acceptor. In Streptococcus equi subsp. equi (strain 4047), this protein is Putative dihydroorotate dehydrogenase A (fumarate) (pyrD).